A 480-amino-acid polypeptide reads, in one-letter code: MGQEGMGYNNGKGGGGGGGGLPMTAPRPRGASPLSSHGHHHRSRKIHRTFNNVKITVLCGLVTILVLRGTIGLNLSLPNQPTDADALAGAKAVEDIDRILREIRSDGGADDDAAAAGDLAGSFNATALNATEAAAAYASAVERYALGPKISDWDGQRRRWLRQNPGFPSTVAGGKPRILLVTGSQPGPCDNPLGDHYLLKTTKNKIDYCRLHGIEIVHNLAHLDTELAGYWAKLPLLRRLMLSHPEVEWIWWMDSDALFTDMAFELPLSRYQDRNLIIHGYQDLLFEKHSWIALNTGSFLFRNCQWSLDLLDAWAPMGPKGFIRDEAGKILTANLKGRPAFEADDQSALIYLLLSQKEKWMNKVFIENSYYLHGFWAGLVDKYEEMMENHHPGLGDERWPFVTHFVGCKPCGSYGDYPVERCLRSMERAFNFADNQVLRLYGFAHKGLESPKIKRVRNQTTKPIDDKENLDVKAKISTTS.

Over residues 1-21 (MGQEGMGYNNGKGGGGGGGGL) the composition is skewed to gly residues. Residues 1–45 (MGQEGMGYNNGKGGGGGGGGLPMTAPRPRGASPLSSHGHHHRSRK) are disordered. The Cytoplasmic segment spans residues 1-49 (MGQEGMGYNNGKGGGGGGGGLPMTAPRPRGASPLSSHGHHHRSRKIHRT). Residues 50-72 (FNNVKITVLCGLVTILVLRGTIG) form a helical; Signal-anchor for type II membrane protein membrane-spanning segment. The Lumenal segment spans residues 73–480 (LNLSLPNQPT…DVKAKISTTS (408 aa)). Residues asparagine 74, asparagine 124, asparagine 129, and asparagine 458 are each glycosylated (N-linked (GlcNAc...) asparagine).

Belongs to the glycosyltransferase 34 family.

It localises to the golgi apparatus membrane. Its function is as follows. Probable glycosyltransferase that may be involved in the biosynthesis of xyloglucan. The sequence is that of Probable glycosyltransferase 2 from Oryza sativa subsp. indica (Rice).